Here is a 536-residue protein sequence, read N- to C-terminus: Chromosomal replication initiator protein DnaA (536 aa).

A domain I, interacts with DnaA modulators region spans residues 1–72; sequence MNDFWQHCSA…DLARDFWNAP (72 aa). Residues 72 to 199 form a domain II region; that stretch reads PIEVQFVLDP…EAADSMYERS (128 aa). Positions 97–121 are disordered; it reads RAPLPAANPAPVTAGPAPSGAADAN. A compositionally biased stretch (low complexity) spans 105-121; it reads PAPVTAGPAPSGAADAN. A domain III, AAA+ region region spans residues 200–416; sequence KLNPVLTFDN…GALRKILAYS (217 aa). Residues glycine 244, glycine 246, lysine 247, and threonine 248 each coordinate ATP. Residues 417 to 536 form a domain IV, binds dsDNA region; that stretch reads KFHGREITIE…LHVLEQTLKG (120 aa).

It belongs to the DnaA family. Oligomerizes as a right-handed, spiral filament on DNA at oriC.

The protein localises to the cytoplasm. In terms of biological role, plays an essential role in the initiation and regulation of chromosomal replication. ATP-DnaA binds to the origin of replication (oriC) to initiate formation of the DNA replication initiation complex once per cell cycle. Binds the DnaA box (a 9 base pair repeat at the origin) and separates the double-stranded (ds)DNA. Forms a right-handed helical filament on oriC DNA; dsDNA binds to the exterior of the filament while single-stranded (ss)DNA is stabiized in the filament's interior. The ATP-DnaA-oriC complex binds and stabilizes one strand of the AT-rich DNA unwinding element (DUE), permitting loading of DNA polymerase. After initiation quickly degrades to an ADP-DnaA complex that is not apt for DNA replication. Binds acidic phospholipids. The protein is Chromosomal replication initiator protein DnaA of Burkholderia thailandensis (strain ATCC 700388 / DSM 13276 / CCUG 48851 / CIP 106301 / E264).